Consider the following 599-residue polypeptide: Dual specificity tyrosine-phosphorylation-regulated kinase 2 (599 aa).

The disordered stretch occupies residues 1 to 55 (MLTRKPSAAAPAAYPTGRGGDTAVRQLQASPGIGAGAPRSGVGTGPPSPIALPPL). Ser30 carries the post-translational modification Phosphoserine. A Phosphothreonine; by ATM modification is found at Thr104. Positions 187–189 (KKR) match the Nuclear localization signal motif. The Protein kinase domain maps to 220–533 (YEVLKVIGKG…PGQALRHPWL (314 aa)). ATP contacts are provided by residues 226–234 (IGKGSFGQV), Lys249, and 299–302 (FELL). Asp346 functions as the Proton acceptor in the catalytic mechanism. Phosphothreonine; by MAP3K10 is present on Thr379. At Tyr380 the chain carries Phosphotyrosine; by autocatalysis. A Phosphoserine; by ATM modification is found at Ser440. Residue Ser447 is modified to Phosphoserine; by MAP3K10.

Belongs to the protein kinase superfamily. CMGC Ser/Thr protein kinase family. MNB/DYRK subfamily. In terms of assembly, component of an E3 ligase complex containing DYRK2, EDD/UBR5, DDB1 and DCAF1 (EDVP complex). Interacts directly with EDD/UBR5, DDB1 and DCAF1. Interacts with SIAH2 and MDM2. Interacts with MAP3K10 and NFATC1. May also interact with CCNL2. Requires Mg(2+) as cofactor. Mn(2+) serves as cofactor. Post-translationally, autophosphorylates cotranslationally on the second tyrosine residue in the Tyr-X-Tyr motif in the activation loop, but once mature, does not have any protein tyrosine kinase activity. Phosphorylated at Thr-104 and Ser-440 by ATM in response to genotoxic stress. In terms of processing, under normal conditions, polyubiquitinated in the nucleus by MDM2, leading to its proteasomal degradation. Phosphorylation on Thr-104 and Ser-440 by ATM in response to genotoxic stress disrupts MDM2 binding and prevents MDM2-mediated ubiquitination and subsequent proteasomal degradation. Polyubiquitinated by SIAH2, leading to its proteasomal degradation. Polyubiquitinated by SIAH2 occurs under normal conditions, and is enhanced in response to hypoxia.

The protein resides in the cytoplasm. The protein localises to the nucleus. The enzyme catalyses L-seryl-[protein] + ATP = O-phospho-L-seryl-[protein] + ADP + H(+). The catalysed reaction is L-threonyl-[protein] + ATP = O-phospho-L-threonyl-[protein] + ADP + H(+). It catalyses the reaction L-tyrosyl-[protein] + ATP = O-phospho-L-tyrosyl-[protein] + ADP + H(+). With respect to regulation, activated by autophosphorylation on the second tyrosine residue in the Tyr-X-Tyr motif in the activation loop. In terms of biological role, serine/threonine-protein kinase involved in the regulation of the mitotic cell cycle, cell proliferation, apoptosis, organization of the cytoskeleton and neurite outgrowth. Functions in part via its role in ubiquitin-dependent proteasomal protein degradation. Functions downstream of ATM and phosphorylates p53/TP53 at 'Ser-46', and thereby contributes to the induction of apoptosis in response to DNA damage. Phosphorylates NFATC1, and thereby inhibits its accumulation in the nucleus and its transcription factor activity. Phosphorylates EIF2B5 at 'Ser-544', enabling its subsequent phosphorylation and inhibition by GSK3B. Likewise, phosphorylation of NFATC1, CRMP2/DPYSL2 and CRMP4/DPYSL3 promotes their subsequent phosphorylation by GSK3B. May play a general role in the priming of GSK3 substrates. Inactivates GYS1 by phosphorylation at 'Ser-641', and potentially also a second phosphorylation site, thus regulating glycogen synthesis. Mediates EDVP E3 ligase complex formation and is required for the phosphorylation and subsequent degradation of KATNA1. Phosphorylates TERT at 'Ser-457', promoting TERT ubiquitination by the EDVP complex. Phosphorylates SIAH2, and thereby increases its ubiquitin ligase activity. Promotes the proteasomal degradation of MYC and JUN, and thereby regulates progress through the mitotic cell cycle and cell proliferation. Promotes proteasomal degradation of GLI2 and GLI3, and thereby plays a role in smoothened and sonic hedgehog signaling. Phosphorylates CRMP2/DPYSL2, CRMP4/DPYSL3, DCX, EIF2B5, EIF4EBP1, GLI2, GLI3, GYS1, JUN, MDM2, MYC, NFATC1, p53/TP53, TAU/MAPT and KATNA1. Can phosphorylate histone H1, histone H3 and histone H2B (in vitro). Can phosphorylate CARHSP1 (in vitro). Plays a role in cytoskeleton organization and neurite outgrowth via its phosphorylation of DCX. The protein is Dual specificity tyrosine-phosphorylation-regulated kinase 2 of Mus musculus (Mouse).